A 156-amino-acid polypeptide reads, in one-letter code: Translation initiation factor IF-1, chloroplastic (156 aa).

A chloroplast-targeting transit peptide spans 1–81 (MASLSWWNPA…RRTTSIQCLS (81 aa)). The disordered stretch occupies residues 51–79 (KSLLVKTQQQSKKKKNNSTNSRRTTSIQC). The segment covering 67-76 (NSTNSRRTTS) has biased composition (low complexity). Residues 82–151 (QEQKWTHEGS…SKGRIIYRLR (70 aa)) form the S1-like domain.

The protein belongs to the IF-1 family. Component of the 30S ribosomal translation pre-initiation complex which assembles on the 30S ribosome in the order IF-2 and IF-3, IF-1 and N-formylmethionyl-tRNA(fMet); mRNA recruitment can occur at any time during PIC assembly.

Its subcellular location is the plastid. The protein localises to the chloroplast. Functionally, one of the essential components for the initiation of protein synthesis. Stabilizes the binding of IF-2 and IF-3 on the 30S subunit to which N-formylmethionyl-tRNA(fMet) subsequently binds. Helps modulate mRNA selection, yielding the 30S pre-initiation complex (PIC). Upon addition of the 50S ribosomal subunit IF-1, IF-2 and IF-3 are released leaving the mature 70S translation initiation complex. The polypeptide is Translation initiation factor IF-1, chloroplastic (infA) (Solanum lycopersicum (Tomato)).